A 438-amino-acid chain; its full sequence is MSTNFSVPEPTPQLVKVAESAKEASISLGQSTNKQRCEALTEMANALNDNADEILKANVQDLERSEKEGLNKSLLSRLQLTKTKLKGCIDGVLKVSNLADPIGKRQLHRELDENLILERVTVPLGVLGVIFESRPDALIQIASLAVRSGNGALLKGGSEAKDTNQSIMDSLDKGLRKSNVGSGALSLLTTRQESLGLLRLDKFVNLIIPRGSNELVQFIQENTRIPVLGHADGICHLYVDNSVDIDKAISIALDSKIQYPAACNAIETLLIHEDVAEMFLKKGLPIFSSEGVTLKGDTKSQALGVKNKADESDWSKEYLDLILSIKIVRNVNEAIEHIRKYSSRHTEAIVTEDKMVAEKFLSSVDSAGVYHNCSTRFADGFRYGFGAEVGISTQTLPPRGPVGLEGLVTYRYYLRGDGDLVKDFASGDRSFSHIDLPL.

It belongs to the gamma-glutamyl phosphate reductase family.

The protein resides in the cytoplasm. It catalyses the reaction L-glutamate 5-semialdehyde + phosphate + NADP(+) = L-glutamyl 5-phosphate + NADPH + H(+). The protein operates within amino-acid biosynthesis; L-proline biosynthesis; L-glutamate 5-semialdehyde from L-glutamate: step 2/2. Catalyzes the NADPH-dependent reduction of L-glutamate 5-phosphate into L-glutamate 5-semialdehyde and phosphate. The product spontaneously undergoes cyclization to form 1-pyrroline-5-carboxylate. The protein is Gamma-glutamyl phosphate reductase of Prochlorococcus marinus (strain NATL1A).